The following is a 323-amino-acid chain: MKQYLDLVRDVIDNGTLQGNRTGIRTISLPGAMLRFDLQKGFPAITTRKLAFKSAIGEMVGFLRGVKNAGEFRELGCKVWDQNANENAQWLANPFRQGHDDLGEIYGVQWRQWPGYKRIPLSNPAAIEMAEQAGFRRIAQDEEDGVAFVILYKAIDQVRQCLDTIANDPGSRRILFHGWNCAQLDEMALPPCHLLYQFHPNVETREISLTLYIRSNDLGLGTPFNLTEGAALLSLFGRLTGYTPRWFTYFIGDAHVYENHLDMLNEQLKREPLEAPKLVISDRVPAFAETGKYEPEWLEKIEPSDFWLEGYEHHAPMTAPMAV.

DUMP contacts are provided by residues Arg-21 and 172 to 173 (RR). Cys-192 (nucleophile) is an active-site residue. Residues 214 to 217 (RSND), Asn-225, and 255 to 257 (HVY) contribute to the dUMP site. Asp-217 is a (6R)-5,10-methylene-5,6,7,8-tetrahydrofolate binding site. A (6R)-5,10-methylene-5,6,7,8-tetrahydrofolate-binding site is contributed by Ala-322.

Belongs to the thymidylate synthase family. Bacterial-type ThyA subfamily. As to quaternary structure, homodimer.

The protein localises to the cytoplasm. It catalyses the reaction dUMP + (6R)-5,10-methylene-5,6,7,8-tetrahydrofolate = 7,8-dihydrofolate + dTMP. Its pathway is pyrimidine metabolism; dTTP biosynthesis. Functionally, catalyzes the reductive methylation of 2'-deoxyuridine-5'-monophosphate (dUMP) to 2'-deoxythymidine-5'-monophosphate (dTMP) while utilizing 5,10-methylenetetrahydrofolate (mTHF) as the methyl donor and reductant in the reaction, yielding dihydrofolate (DHF) as a by-product. This enzymatic reaction provides an intracellular de novo source of dTMP, an essential precursor for DNA biosynthesis. The polypeptide is Thymidylate synthase (Pseudomonas putida (strain ATCC 47054 / DSM 6125 / CFBP 8728 / NCIMB 11950 / KT2440)).